Here is a 705-residue protein sequence, read N- to C-terminus: Putative membrane protein SCO6666 (705 aa).

A run of 13 helical transmembrane segments spans residues 16–36 (VMLL…GVFG), 144–164 (LHGI…PLLG), 177–197 (NAEL…FGGL), 201–221 (GLPL…LFGF), 232–252 (IQVT…LMLV), 280–300 (LFSG…PSTF), 306–326 (LAVA…LPAL), 360–380 (VAVL…VTGM), 504–524 (ALTV…SVLL), 528–548 (TVAT…WVFQ), 561–581 (LGAL…GLAM), 615–635 (VVTC…TGGF), and 636–656 (SPIL…ATVV).

This sequence belongs to the resistance-nodulation-cell division (RND) (TC 2.A.6) family. MmpL subfamily.

The protein resides in the cell membrane. This is Putative membrane protein SCO6666 from Streptomyces coelicolor (strain ATCC BAA-471 / A3(2) / M145).